The following is a 319-amino-acid chain: Pantothenate kinase (319 aa).

97-104 serves as a coordination point for ATP; it reads GSVAVGKS.

It belongs to the prokaryotic pantothenate kinase family.

The protein localises to the cytoplasm. It carries out the reaction (R)-pantothenate + ATP = (R)-4'-phosphopantothenate + ADP + H(+). Its pathway is cofactor biosynthesis; coenzyme A biosynthesis; CoA from (R)-pantothenate: step 1/5. This is Pantothenate kinase from Chelativorans sp. (strain BNC1).